Consider the following 142-residue polypeptide: Putative pre-16S rRNA nuclease (142 aa).

The protein belongs to the YqgF nuclease family.

It localises to the cytoplasm. Its function is as follows. Could be a nuclease involved in processing of the 5'-end of pre-16S rRNA. This is Putative pre-16S rRNA nuclease from Saccharophagus degradans (strain 2-40 / ATCC 43961 / DSM 17024).